We begin with the raw amino-acid sequence, 157 residues long: Beta-defensin 125 (157 aa).

The N-terminal stretch at 1–20 (MNILMLTFIICGLLTQVTKG) is a signal peptide. Cystine bridges form between Cys27/Cys55, Cys35/Cys49, and Cys39/Cys56. Positions 109 to 157 (GETMTPETNTPETTMPPPETTTPETTMPPSETATSETMPPPSQRALTHN) are disordered. Composition is skewed to low complexity over residues 110–121 (ETMTPETNTPET) and 129–145 (TTPE…TSET).

Belongs to the beta-defensin family.

The protein localises to the secreted. Its function is as follows. Has antibacterial activity. This chain is Beta-defensin 125 (DEFB125), found in Pan troglodytes (Chimpanzee).